A 204-amino-acid chain; its full sequence is Proteasome subunit beta type-3 (204 aa).

This sequence belongs to the peptidase T1B family. As to quaternary structure, the 26S proteasome consists of a 20S proteasome core and two 19S regulatory subunits. The 20S proteasome core is composed of 28 subunits that are arranged in four stacked rings, resulting in a barrel-shaped structure. The two end rings are each formed by seven alpha subunits, and the two central rings are each formed by seven beta subunits. The catalytic chamber with the active sites is on the inside of the barrel.

It localises to the cytoplasm. The protein localises to the nucleus. Non-catalytic component of the proteasome, a multicatalytic proteinase complex which is characterized by its ability to cleave peptides with Arg, Phe, Tyr, Leu, and Glu adjacent to the leaving group at neutral or slightly basic pH. The proteasome has an ATP-dependent proteolytic activity. This Picea mariana (Black spruce) protein is Proteasome subunit beta type-3 (PBC1).